Here is a 238-residue protein sequence, read N- to C-terminus: Ribose-5-phosphate isomerase A (238 aa).

Residues 30–33, 87–90, and 100–103 each bind substrate; these read SGST, DGAD, and KGGG. The Proton acceptor role is filled by glutamate 109. Lysine 127 lines the substrate pocket.

Belongs to the ribose 5-phosphate isomerase family. Homodimer.

It catalyses the reaction aldehydo-D-ribose 5-phosphate = D-ribulose 5-phosphate. Its pathway is carbohydrate degradation; pentose phosphate pathway; D-ribose 5-phosphate from D-ribulose 5-phosphate (non-oxidative stage): step 1/1. In terms of biological role, catalyzes the reversible conversion of ribose-5-phosphate to ribulose 5-phosphate. This is Ribose-5-phosphate isomerase A from Prochlorococcus marinus (strain MIT 9303).